A 142-amino-acid chain; its full sequence is Large ribosomal subunit protein uL22c (142 aa).

The protein belongs to the universal ribosomal protein uL22 family. In terms of assembly, part of the 50S ribosomal subunit.

The protein localises to the plastid. It localises to the chloroplast. This protein binds specifically to 23S rRNA. Its function is as follows. The globular domain of the protein is located near the polypeptide exit tunnel on the outside of the subunit, while an extended beta-hairpin is found that lines the wall of the exit tunnel in the center of the 70S ribosome. The polypeptide is Large ribosomal subunit protein uL22c (rpl22) (Ceratophyllum demersum (Rigid hornwort)).